A 71-amino-acid polypeptide reads, in one-letter code: MAFLKKSLLLVLFLALVPLSICEEEKREEEDEEKQEDDDQSENKRGLLSGILNSAGGLLGNLIGSLSNGES.

The first 22 residues, 1-22 (MAFLKKSLLLVLFLALVPLSIC), serve as a signal peptide directing secretion. The propeptide occupies 23–45 (EEEKREEEDEEKQEDDDQSENKR). Positions 25–46 (EKREEEDEEKQEDDDQSENKRG) are disordered. A compositionally biased stretch (acidic residues) spans 26–40 (KREEEDEEKQEDDDQ). N68 is modified (asparagine amide). Positions 70–71 (ES) are excised as a propeptide.

It belongs to the frog skin active peptide (FSAP) family. Plasticin subfamily. As to expression, expressed by the skin glands.

Its subcellular location is the secreted. It is found in the target cell membrane. Its function is as follows. Neutral peptide with no antimicrobial activity. May act in synergy with cationic peptides by enhancing their activity. Has a moderate hemolytic activity. This Agalychnis callidryas (Red-eyed tree frog) protein is Plasticin-C2.